Reading from the N-terminus, the 780-residue chain is MASAELQGKYQKLAQEYSKLRAQNQVLKKGVVDEQASSAALKEQLKMKDQSLRKLQQEMDSLTFRNLQLAKRVELLQDELALSEPRGKKNKKSGESSSQLSQEQKSVFDEDLQKKIEENERLHIQFFEADEHHRHVEAELRSRLATLETEAAQHQAVIDGLTRKYMETIEKLQSDKAKLEVKSQTLEKEAKECRLRTEECQLQLKNLHEDLSGRLEESLSIINEKVPFNDTKCHLYNALNVPLHNRRHQLKMRDIAGQALAFVQDLVPALLNFHTYTEQRIQIFPVDSAIDTISPLNQKFSQYLHENASYVRPLEEGMLHLFESITEDTVTVLETTVKLKMFSDHLTSYVRFLRKILPYQLKSLEEECESSLCTPALRARNLELSQDMKTMTAVFEKLQTYVTLLALPSTEPDGLLRTNYTSVLTNVGAALHGFHDVMKDISKHYSQKASIEHEIPTATQKLVTTNDCILSSAVTLTNGAGKIASFFGNNVDYFIASLSYGPKTASGFISPLSAECMLQYKKKAAAYMKSLRTPLAESVPYGEAVANRRVLLSSTESREGLAQQVQQSLEKISKLEQEKEHWMLEAQLAKIKLEKENQRIADRLRGTTSAQLPGLAQENATVPIASSQEEAAAKVLTEPVQSTSLVGMLTRTPDSEAPDVESREDLIKSHYMARIAELTSQLQLADSKSVHFYAECRALSKRLALAEKSKETLTEEMRLASQNISRLQDELMTTKRSYEDQLSMMSDHLCSMNETLSKQREEIDTLKMASKGNSKKTRNR.

2 coiled-coil regions span residues 1–209 (MASA…NLHE) and 556–605 (ESRE…DRLR). The interval 84 to 104 (EPRGKKNKKSGESSSQLSQEQ) is disordered. Positions 95–104 (ESSSQLSQEQ) are enriched in low complexity. T652 bears the Phosphothreonine mark. Positions 694–742 (AECRALSKRLALAEKSKETLTEEMRLASQNISRLQDELMTTKRSYEDQL) form a coiled coil.

Component of the FERRY complex, composed of five subunits: TBCK, PPP1R21, FERRY3, CRYZL1 and GATAD1, with a ratio of 1:2:1:2:4 respectively. PPP1R21 serves as a binding hub connecting all five complex subunits to mediate the binding to specific mitochondrial mRNAs. Interacts with the GTP-bound form of RAB5A (via its C-terminal region); linking the mRNP complex onto trafficking endosomes for active mRNA transport. Interacts with PPP1CA. Expressed at 16 dpc in the cortex (at protein level).

The protein resides in the early endosome. Component of the FERRY complex (Five-subunit Endosomal Rab5 and RNA/ribosome intermediary). The FERRY complex directly interacts with mRNAs and RAB5A, and functions as a RAB5A effector involved in the localization and the distribution of specific mRNAs most likely by mediating their endosomal transport. The complex recruits mRNAs and ribosomes to early endosomes through direct mRNA-interaction. In the complex, PPP1R21 serves as a binding hub connecting all five complex subunits and mediating the binding to mRNA and early endosomes via RAB5A. Putative regulator of protein phosphatase 1 (PP1) activity. May play a role in the endosomal sorting process or in endosome maturation pathway. The sequence is that of Protein phosphatase 1 regulatory subunit 21 (Ppp1r21) from Mus musculus (Mouse).